Reading from the N-terminus, the 61-residue chain is Temporin-CDYa (61 aa).

An N-terminal signal peptide occupies residues 1-22 (MFPLKKSLLLLFFLGTINFSFC). The propeptide occupies 23-44 (EEERNAEEERRDDPEERDVAME). Leu59 carries the post-translational modification Leucine amide.

The protein belongs to the frog skin active peptide (FSAP) family. Temporin subfamily. In terms of tissue distribution, expressed by the skin glands.

It is found in the secreted. Its function is as follows. Antimicrobial peptide. The chain is Temporin-CDYa from Rana dybowskii (Dybovsky's frog).